The primary structure comprises 104 residues: Pterin-4-alpha-carbinolamine dehydratase (104 aa).

The residue at position 2 (Ala2) is an N-acetylalanine. Substrate-binding positions include 61-63 (DHH) and 78-81 (STHE).

The protein belongs to the pterin-4-alpha-carbinolamine dehydratase family. Homotetramer and homodimer. Heterotetramer with HNF1A; formed by a dimer of dimers. Interacts with HNF1B (via HNF-p1 domain); the interaction increases HNF1B transactivation activity.

It is found in the cytoplasm. It localises to the nucleus. The catalysed reaction is (4aS,6R)-4a-hydroxy-L-erythro-5,6,7,8-tetrahydrobiopterin = (6R)-L-erythro-6,7-dihydrobiopterin + H2O. Its function is as follows. Involved in tetrahydrobiopterin biosynthesis. Seems to both prevent the formation of 7-pterins and accelerate the formation of quinonoid-BH2. Coactivator for HNF1A-dependent transcription. Regulates the dimerization of homeodomain protein HNF1A and enhances its transcriptional activity. Also acts as a coactivator for HNF1B-dependent transcription. The chain is Pterin-4-alpha-carbinolamine dehydratase (PCBD1) from Bos taurus (Bovine).